We begin with the raw amino-acid sequence, 92 residues long: Small ribosomal subunit protein uS19c (92 aa).

It belongs to the universal ribosomal protein uS19 family.

The protein resides in the plastid. It localises to the chloroplast. Functionally, protein S19 forms a complex with S13 that binds strongly to the 16S ribosomal RNA. The sequence is that of Small ribosomal subunit protein uS19c from Liriodendron tulipifera (Tuliptree).